A 145-amino-acid chain; its full sequence is Large ribosomal subunit protein uL13 (145 aa).

The tract at residues aspartate 72 to glycine 91 is disordered.

It belongs to the universal ribosomal protein uL13 family. As to quaternary structure, part of the 50S ribosomal subunit.

In terms of biological role, this protein is one of the early assembly proteins of the 50S ribosomal subunit, although it is not seen to bind rRNA by itself. It is important during the early stages of 50S assembly. The sequence is that of Large ribosomal subunit protein uL13 from Staphylococcus epidermidis (strain ATCC 12228 / FDA PCI 1200).